Here is a 164-residue protein sequence, read N- to C-terminus: Putative pre-16S rRNA nuclease (164 aa).

Belongs to the YqgF nuclease family.

Its subcellular location is the cytoplasm. Could be a nuclease involved in processing of the 5'-end of pre-16S rRNA. This Rhizobium rhizogenes (strain K84 / ATCC BAA-868) (Agrobacterium radiobacter) protein is Putative pre-16S rRNA nuclease.